We begin with the raw amino-acid sequence, 316 residues long: MSFASETKKELTNLEMKECCEKAELSALLRMNGSLSFSNRRLSIDIQTENAAIARRIYTLLKKGYDVTVELLVRKKMRLKKNNVYIVRLVEKSREILADLHIVRDDFSFIRNISQELIEKKCCKRSYLRGAFLAGGSVNNPETSSYHLEIFSLYKEHNDAICELMNGFDLNSKTLERRKGYITYLKEAEKITEFLNIIGAHNALLRFEDIRIVRDMRNSVNRLVNCETANLNKTIGAALRQIENIRYIDETVGLDILPDKLQEIAQLRRDYQDVTLKELGEMVSGGKISKSGINHRLRKIDEIAEKLRAGETLVKK.

The H-T-H motif DNA-binding region spans 275–309 (TLKELGEMVSGGKISKSGINHRLRKIDEIAEKLRA).

The protein belongs to the WhiA family.

Functionally, involved in cell division and chromosome segregation. In Bacillus cereus (strain B4264), this protein is Probable cell division protein WhiA.